We begin with the raw amino-acid sequence, 544 residues long: Chaperonin GroEL 1 (544 aa).

ATP is bound by residues 29–32, 86–90, Gly413, and Asp495; these read TLGP and DGTTT. The segment at 525–544 is disordered; that stretch reads PEPKTNTPASSGSGMSDYDY. Over residues 528–538 the composition is skewed to polar residues; that stretch reads KTNTPASSGSG.

This sequence belongs to the chaperonin (HSP60) family. Forms a cylinder of 14 subunits composed of two heptameric rings stacked back-to-back. Interacts with the co-chaperonin GroES.

Its subcellular location is the cytoplasm. It catalyses the reaction ATP + H2O + a folded polypeptide = ADP + phosphate + an unfolded polypeptide.. In terms of biological role, together with its co-chaperonin GroES, plays an essential role in assisting protein folding. The GroEL-GroES system forms a nano-cage that allows encapsulation of the non-native substrate proteins and provides a physical environment optimized to promote and accelerate protein folding. This chain is Chaperonin GroEL 1, found in Synechococcus sp. (strain JA-2-3B'a(2-13)) (Cyanobacteria bacterium Yellowstone B-Prime).